The following is a 98-amino-acid chain: NADH-ubiquinone oxidoreductase chain 4L (98 aa).

A run of 3 helical transmembrane segments spans residues 1–21 (MSLV…GLLM), 29–49 (ALLC…LTIL), and 61–81 (IILL…LVMI).

Belongs to the complex I subunit 4L family. In terms of assembly, core subunit of respiratory chain NADH dehydrogenase (Complex I) which is composed of 45 different subunits.

Its subcellular location is the mitochondrion inner membrane. It catalyses the reaction a ubiquinone + NADH + 5 H(+)(in) = a ubiquinol + NAD(+) + 4 H(+)(out). Core subunit of the mitochondrial membrane respiratory chain NADH dehydrogenase (Complex I) which catalyzes electron transfer from NADH through the respiratory chain, using ubiquinone as an electron acceptor. Part of the enzyme membrane arm which is embedded in the lipid bilayer and involved in proton translocation. The polypeptide is NADH-ubiquinone oxidoreductase chain 4L (MT-ND4L) (Delphinapterus leucas (Beluga whale)).